The primary structure comprises 250 residues: NAD-dependent protein deacylase (250 aa).

One can recognise a Deacetylase sirtuin-type domain in the interval 1–250; sequence MIVEVARVLA…VVHEVRRLLQ (250 aa). An NAD(+)-binding site is contributed by 20–39; sequence GAGISAESGVPTFRGKDGLW. Substrate-binding residues include Tyr-64 and Arg-67. 98-101 is a binding site for NAD(+); sequence QNVD. His-116 acts as the Proton acceptor in catalysis. Zn(2+) contacts are provided by Cys-124, Cys-127, Cys-150, and Cys-153. NAD(+)-binding positions include 190 to 192, 216 to 218, and Ala-234; these read GTS and NVE.

Belongs to the sirtuin family. Class III subfamily. It depends on Zn(2+) as a cofactor.

The protein resides in the cytoplasm. It catalyses the reaction N(6)-acetyl-L-lysyl-[protein] + NAD(+) + H2O = 2''-O-acetyl-ADP-D-ribose + nicotinamide + L-lysyl-[protein]. It carries out the reaction N(6)-succinyl-L-lysyl-[protein] + NAD(+) + H2O = 2''-O-succinyl-ADP-D-ribose + nicotinamide + L-lysyl-[protein]. Its function is as follows. NAD-dependent lysine deacetylase and desuccinylase that specifically removes acetyl and succinyl groups on target proteins. Modulates the activities of several proteins which are inactive in their acylated form. Deacetylates the N-terminal lysine residue of Alba, the major archaeal chromatin protein and that, in turn, increases Alba's DNA binding affinity, thereby repressing transcription. This chain is NAD-dependent protein deacylase, found in Pyrococcus abyssi (strain GE5 / Orsay).